Reading from the N-terminus, the 516-residue chain is MAGTMDRLEDCNSPETSGTAGDALPSPRVYARRWVFLLVVSLLSCSNAMLWLSFAPVADTIAQHFFLSMDQVNWLSLIYFVLSIPFGMAAIWVLDSVGLRGATILGAWLNFSGSVLRAVPCLPVRIPSPFAFFMSGQSLCALAQTLVVSSPAKLAALWFPEHQRATANMISTMSNPLGLLIANVLSPALVKKADDIPMMLGIYIGPAALACLLATVCLWESVPPTPPSTGAANSTSESFLRGLKLLIQNKAYVLLAVCFGGGIGVFSSFSALLEQILCASGYSNEFSGLCGALFIVFGILGALLLGLYVDRTKHFTEATKIGLCLTSMTSVAFALVSQLQGQTLALAAICSLFGLFGFSVAPVVMELAVECSFPVGEGASAGLIFVLGQAEGMLIMLLLTALTVRRTGPSFSTCQQGEDPLDWTVSLLLLAGLCTLFTCVLVIFFNTPYRRLEAESGGSSSPTMCARDPRTVSPTQVPPLETPGLTPPDEALKEAPGPASVSKGHSEWAETMPRDV.

The segment covering 1 to 10 (MAGTMDRLED) has biased composition (basic and acidic residues). A disordered region spans residues 1 to 22 (MAGTMDRLEDCNSPETSGTAGD). The next 12 membrane-spanning stretches (helical) occupy residues 34-54 (WVFL…WLSF), 74-94 (WLSL…IWVL), 104-124 (ILGA…CLPV), 139-159 (LCAL…ALWF), 170-190 (ISTM…PALV), 199-219 (MLGI…VCLW), 253-273 (VLLA…SALL), 289-309 (LCGA…GLYV), 321-341 (IGLC…QLQG), 344-364 (LALA…APVV), 382-402 (GLIF…LTAL), and 425-445 (VSLL…VIFF). The tract at residues 453–516 (EAESGGSSSP…EWAETMPRDV (64 aa)) is disordered. Residues 504–516 (GHSEWAETMPRDV) are compositionally biased toward basic and acidic residues.

It belongs to the major facilitator superfamily.

It is found in the membrane. This Mus musculus (Mouse) protein is Solute carrier family 49 member A3 (Slc49a3).